The primary structure comprises 137 residues: MRILGLDVGTKTVGVAISDEMGWTAQGLETIKINEERGQFGFDRISELVKQYDVDKIVVGLPKNMNGTIGPRGEACQQFAENLRELLQLDVVMWDERLSTMAAERLLISADVSRKKRKQVIDKMAAVVILQGFLDSK.

It belongs to the YqgF nuclease family.

Its subcellular location is the cytoplasm. Could be a nuclease involved in processing of the 5'-end of pre-16S rRNA. This chain is Putative pre-16S rRNA nuclease, found in Bacillus cereus (strain 03BB102).